Here is a 208-residue protein sequence, read N- to C-terminus: Putative 3-methyladenine DNA glycosylase (208 aa).

The tract at residues 1–20 (MGRAHTVSRGEDHPPIARSE) is disordered.

This sequence belongs to the DNA glycosylase MPG family.

The sequence is that of Putative 3-methyladenine DNA glycosylase from Mesorhizobium japonicum (strain LMG 29417 / CECT 9101 / MAFF 303099) (Mesorhizobium loti (strain MAFF 303099)).